The following is a 147-amino-acid chain: Large ribosomal subunit protein uL13 (147 aa).

Belongs to the universal ribosomal protein uL13 family. As to quaternary structure, part of the 50S ribosomal subunit.

Its function is as follows. This protein is one of the early assembly proteins of the 50S ribosomal subunit, although it is not seen to bind rRNA by itself. It is important during the early stages of 50S assembly. This is Large ribosomal subunit protein uL13 from Rhodococcus jostii (strain RHA1).